We begin with the raw amino-acid sequence, 296 residues long: tRNA uridine(34) hydroxylase (296 aa).

The Rhodanese domain maps to 130-225 (RGEDVVFFDG…YGEAYGDRGL (96 aa)). Catalysis depends on cysteine 185, which acts as the Cysteine persulfide intermediate.

It belongs to the TrhO family.

It catalyses the reaction uridine(34) in tRNA + AH2 + O2 = 5-hydroxyuridine(34) in tRNA + A + H2O. Its function is as follows. Catalyzes oxygen-dependent 5-hydroxyuridine (ho5U) modification at position 34 in tRNAs. The protein is tRNA uridine(34) hydroxylase of Kocuria rhizophila (strain ATCC 9341 / DSM 348 / NBRC 103217 / DC2201).